The chain runs to 193 residues: Acyl carrier protein phosphodiesterase (193 aa).

This sequence belongs to the AcpH family.

The catalysed reaction is holo-[ACP] + H2O = apo-[ACP] + (R)-4'-phosphopantetheine + H(+). In terms of biological role, converts holo-ACP to apo-ACP by hydrolytic cleavage of the phosphopantetheine prosthetic group from ACP. In Shigella boydii serotype 4 (strain Sb227), this protein is Acyl carrier protein phosphodiesterase.